We begin with the raw amino-acid sequence, 230 residues long: Ion-translocating oxidoreductase complex subunit E (230 aa).

Helical transmembrane passes span 11–31 (GMWANNPALVQLLGLCPLLAV), 39–59 (LGLGIATLLVLVGSNVSVSLV), 69–89 (IPVFVMIIASLVTCVQLLMNA), 93–113 (GLYLSLGIFIPLIVTNCIIIG), 132–152 (FWMGLGMTSVLVVLGAMREII), and 182–202 (SFLLALLPPGAFIGVGFLIAL).

It belongs to the NqrDE/RnfAE family. In terms of assembly, the complex is composed of six subunits: RnfA, RnfB, RnfC, RnfD, RnfE and RnfG.

It localises to the cell inner membrane. Functionally, part of a membrane-bound complex that couples electron transfer with translocation of ions across the membrane. This Vibrio atlanticus (strain LGP32) (Vibrio splendidus (strain Mel32)) protein is Ion-translocating oxidoreductase complex subunit E.